Consider the following 204-residue polypeptide: LexA repressor (204 aa).

The H-T-H motif DNA-binding region spans 28 to 48 (RAEIANRLGFKSANAAEEHLK). Residues Ser-121 and Lys-158 each act as for autocatalytic cleavage activity in the active site.

It belongs to the peptidase S24 family. Homodimer.

The catalysed reaction is Hydrolysis of Ala-|-Gly bond in repressor LexA.. Represses a number of genes involved in the response to DNA damage (SOS response), including recA and lexA. In the presence of single-stranded DNA, RecA interacts with LexA causing an autocatalytic cleavage which disrupts the DNA-binding part of LexA, leading to derepression of the SOS regulon and eventually DNA repair. The chain is LexA repressor from Shewanella frigidimarina (strain NCIMB 400).